Reading from the N-terminus, the 482-residue chain is Nuclear transcription factor Y subunit nfya-1 (482 aa).

The interval 1–160 (MNGASRGDVQ…NGSYIQYNEP (160 aa)) is disordered. Residues 72–93 (SSPNVQTQCHQPPVVRSQTHQA) show a composition bias toward polar residues. Residues 94 to 110 (SVSQTTPTQTTPSQYTP) show a composition bias toward low complexity. Polar residues-rich tracts occupy residues 126–135 (HVTPSQQQRI) and 144–160 (VSQS…YNEP). The Subunit association domain (SAD) motif lies at 306-329 (LVNPKQFNRIMRRREMRQQLEASG). The segment at residues 336–361 (QKYLHESRHLHALKRKRGLDGRFDNT) is a DNA-binding region (NFYA/HAP2-type). The tract at residues 344 to 414 (HLHALKRKRG…QPKGGIVNSS (71 aa)) is disordered. Basic and acidic residues predominate over residues 353-362 (GLDGRFDNTK). Low complexity predominate over residues 363-375 (TAESSSMVSSTTS).

It belongs to the NFYA/HAP2 subunit family. As to quaternary structure, forms a heterotrimeric transcription factor complex (nfya-1-NF-Y complex) composed of nfya-1, nfyb-1 and nfyc-1, which binds to 5'-CCAAT-3' box motif in the promoters of its target genes. Interacts with the nfyb-1 and nfyc-1 dimer; the interaction is required for subsequent binding to the 5'-CCAAT-3' box motif in DNA. Does not interact with either nfyb-1 or nfyc-1 in their monomeric form. Interacts with mes-3. In terms of tissue distribution, expressed in certain parts of the gonads with high expression in fertilized oocytes in the uterus and mature oocytes from the distal to the proximal arm of the gonad, but weak expression in the syncytial ovaries and immature oocytes at the beginning of the proximal arm of the gonad. Highly expressed in the head ganglia neurons and the developing hermaphrodite vulva and male tail. Weakly expressed in most somatic cells. Not expressed in the intestine, the hypodermis, body wall muscle surrounding the pseudocoelomic space, secretory cells in the pharyngeal terminal bulb wall, in the small ganglia surrounding the pharynx and in the neurons running anteriorly to the sensory organs in the head.

The protein localises to the nucleus. Component of the sequence-specific heterotrimeric transcription factor (nfya-1-NF-Y) which specifically recognizes a 5'-CCAAT-3' box motif found in the promoters of its target genes to regulate their expression and control cellular identity in particular tissue types. In association with the components in the nfya-1-NF-Y complex, represses the expression of the T-box transcription factor tbx-2 throughout larval development, which most likely restricts its expression to certain tissues. May act to repress txb-2 expression in conjunction with tbx-2 itself, which has an autoregulatory role. With the components in this complex, negatively regulates the expression of the homeobox protein egl-5 to spatially restrict its expression in tissues such as the head. May regulate egl-5 expression in association with the mes-2-mes-3-mes-6 complex. The sequence is that of Nuclear transcription factor Y subunit nfya-1 from Caenorhabditis elegans.